The chain runs to 143 residues: Probable prefoldin subunit 2 (143 aa).

Belongs to the prefoldin subunit beta family. As to quaternary structure, heterohexamer of two PFD-alpha type and four PFD-beta type subunits.

In terms of biological role, binds specifically to cytosolic chaperonin (c-CPN) and transfers target proteins to it. Binds to nascent polypeptide chain and promotes folding in an environment in which there are many competing pathways for nonnative proteins. This is Probable prefoldin subunit 2 from Drosophila melanogaster (Fruit fly).